The following is a 547-amino-acid chain: MAAKDVVFGDAARAKMVEGVNILANAVKVTLGPKGRNVVLERSFGGPTVTKDGVSVAKEIELKDKLQNMGAQMVKEVASKTSDNAGDGTTTATVLAQSIVREGMKFVAAGMNPMDLKRGIDKAVGAAVEELKKLSKPTTTSKEIAQVGAISANSDASIGERIAEAMDKVGKEGVITVEDGKSLADELEVVEGMQFDRGYLSPYFINNPEKQVVQLDSPFVLLFDKKVSNIRDLLPVLEQVAKAGRPLLIIAEDVEGEALATLVVNNIRGILKTAAVKAPGFGDRRKAMLEDIAILTGGTVIAEEIGLTLEKATLQDLGQAKRIEIGKENTIIIDGAGDASAIEGRVKQIRAQIEEATSDYDREKLQERVAKLAGGVAVIKVGAATEVEMKEKKARVEDALHATRAAVEEGIVPGGGVALLRARAAIAGLHGENPDQNAGIKIVLRAMEEPLRQIVLNAGEEASVVVAKVIEGKGNYGYNAASGEYGDLVEMGVLDPTKVTRTALQNAASVASLMLTTDCAVAESPKEESAPAMPGGMGGMGGMEGMM.

Residues 30 to 33 (TLGP), K51, 87 to 91 (DGTTT), G415, 479 to 481 (NAA), and D495 contribute to the ATP site.

This sequence belongs to the chaperonin (HSP60) family. As to quaternary structure, forms a cylinder of 14 subunits composed of two heptameric rings stacked back-to-back. Interacts with the co-chaperonin GroES.

Its subcellular location is the cytoplasm. It catalyses the reaction ATP + H2O + a folded polypeptide = ADP + phosphate + an unfolded polypeptide.. Functionally, together with its co-chaperonin GroES, plays an essential role in assisting protein folding. The GroEL-GroES system forms a nano-cage that allows encapsulation of the non-native substrate proteins and provides a physical environment optimized to promote and accelerate protein folding. This chain is Chaperonin GroEL, found in Cupriavidus metallidurans (strain ATCC 43123 / DSM 2839 / NBRC 102507 / CH34) (Ralstonia metallidurans).